The primary structure comprises 92 residues: U21-hexatoxin-Hi1a (92 aa).

A signal peptide spans 1 to 19; sequence MKTILSMLIFVALFAAIVG. 4 cysteine pairs are disulfide-bonded: Cys-41-Cys-55, Cys-48-Cys-67, Cys-54-Cys-82, and Cys-85-Cys-92.

Belongs to the neurotoxin 21 family. Expressed by the venom gland.

The protein resides in the secreted. In terms of biological role, potent insecticidal toxin with probable ion channel impairing activity. In vivo, reversibly paralyzes all flies within 30 minutes, even at low dose (0.3 nmol/g). This Hadronyche infensa (Fraser island funnel-web spider) protein is U21-hexatoxin-Hi1a.